The primary structure comprises 438 residues: DNA primase DnaG (438 aa).

In terms of domain architecture, Toprim spans 169–243 (DSIIVVEGRA…DIDYVARAPY (75 aa)). Mg(2+) contacts are provided by Glu175, Asp217, and Asp219.

Belongs to the archaeal DnaG primase family. Forms a ternary complex with MCM helicase and DNA. Requires Mg(2+) as cofactor.

It carries out the reaction ssDNA + n NTP = ssDNA/pppN(pN)n-1 hybrid + (n-1) diphosphate.. RNA polymerase that catalyzes the synthesis of short RNA molecules used as primers for DNA polymerase during DNA replication. The chain is DNA primase DnaG from Methanococcus maripaludis (strain C5 / ATCC BAA-1333).